A 376-amino-acid chain; its full sequence is Glutamate 5-kinase (376 aa).

Lysine 16 serves as a coordination point for ATP. Substrate-binding residues include serine 56, aspartate 143, and asparagine 155. 175-176 (TD) contributes to the ATP binding site. Residues 283-361 (RGALSLDEGA…RDIETTLGYV (79 aa)) form the PUA domain.

Belongs to the glutamate 5-kinase family.

Its subcellular location is the cytoplasm. The catalysed reaction is L-glutamate + ATP = L-glutamyl 5-phosphate + ADP. It participates in amino-acid biosynthesis; L-proline biosynthesis; L-glutamate 5-semialdehyde from L-glutamate: step 1/2. Its function is as follows. Catalyzes the transfer of a phosphate group to glutamate to form L-glutamate 5-phosphate. The chain is Glutamate 5-kinase from Halorhodospira halophila (strain DSM 244 / SL1) (Ectothiorhodospira halophila (strain DSM 244 / SL1)).